Here is a 184-residue protein sequence, read N- to C-terminus: MNRTAYTVGALLLLLGTLLPAAEGKKKGSQGAIPPPDKAQHNDSEQTQSPPQPGSRTRGRGQGRGTAMPGEEVLESSQEALHVTERKYLKRDWCKTQPLKQTIHEEGCNSRTIINRFCYGQCNSFYIPRHIRKEEGSFQSCSFCKPKKFTTMMVTLNCPELQPPTKKKRVTRVKQCRCISIDLD.

A signal peptide spans 1 to 24 (MNRTAYTVGALLLLLGTLLPAAEG). 2 N-linked (GlcNAc...) asparagine glycosylation sites follow: asparagine 2 and asparagine 42. Residues 24–78 (GKKKGSQGAIPPPDKAQHNDSEQTQSPPQPGSRTRGRGQGRGTAMPGEEVLESSQ) form a disordered region. 4 cysteine pairs are disulfide-bonded: cysteine 94/cysteine 144, cysteine 108/cysteine 158, cysteine 118/cysteine 176, and cysteine 122/cysteine 178. A CTCK domain is found at 94-184 (CKTQPLKQTI…QCRCISIDLD (91 aa)).

Belongs to the DAN family. Homodimer; can also form homooligomers. Interacts with BMP2; can form higher oligomers with BMP2. Interacts with SLIT1 and SLIT2 in a glycosylation-dependent manner. In terms of tissue distribution, highly expressed in the brain, kidney, spleen, and testis and weakly expressed in the lung and liver. Predominantly expressed in differentiated cells as neurons in brain, type I cells in lung and globlet cells in intestine.

The protein resides in the secreted. Its function is as follows. Cytokine that may play an important role during carcinogenesis and metanephric kidney organogenesis, as a BMP antagonist required for early limb outgrowth and patterning in maintaining the FGF4-SHH feedback loop. Down-regulates the BMP4 signaling in a dose-dependent manner. Antagonist of BMP2; inhibits BMP2-mediated differentiation of osteoblasts (in vitro). Acts as inhibitor of monocyte chemotaxis. Can inhibit the growth or viability of normal cells but not transformed cells when is overexpressed. The chain is Gremlin-1 (Grem1) from Rattus norvegicus (Rat).